The sequence spans 232 residues: Fibrillarin-like rRNA/tRNA 2'-O-methyltransferase (232 aa).

S-adenosyl-L-methionine is bound by residues 89-90, 108-109, 133-134, and 153-156; these read TT, EF, DA, and DIAQ.

Belongs to the methyltransferase superfamily. Fibrillarin family. In terms of assembly, interacts with nop5. Component of box C/D small ribonucleoprotein (sRNP) particles that contain rpl7ae, FlpA and nop5, plus a guide RNA.

Functionally, involved in pre-rRNA and tRNA processing. Utilizes the methyl donor S-adenosyl-L-methionine to catalyze the site-specific 2'-hydroxyl methylation of ribose moieties in rRNA and tRNA. Site specificity is provided by a guide RNA that base pairs with the substrate. Methylation occurs at a characteristic distance from the sequence involved in base pairing with the guide RNA. The sequence is that of Fibrillarin-like rRNA/tRNA 2'-O-methyltransferase from Methanopyrus kandleri (strain AV19 / DSM 6324 / JCM 9639 / NBRC 100938).